Reading from the N-terminus, the 346-residue chain is Phenylalanine--tRNA ligase alpha subunit (346 aa).

Residue Glu-262 coordinates Mg(2+).

The protein belongs to the class-II aminoacyl-tRNA synthetase family. Phe-tRNA synthetase alpha subunit type 1 subfamily. Tetramer of two alpha and two beta subunits. The cofactor is Mg(2+).

The protein resides in the cytoplasm. It catalyses the reaction tRNA(Phe) + L-phenylalanine + ATP = L-phenylalanyl-tRNA(Phe) + AMP + diphosphate + H(+). The polypeptide is Phenylalanine--tRNA ligase alpha subunit (Ehrlichia chaffeensis (strain ATCC CRL-10679 / Arkansas)).